We begin with the raw amino-acid sequence, 90 residues long: Large ribosomal subunit protein bL27 (90 aa).

It belongs to the bacterial ribosomal protein bL27 family.

This Paracoccus denitrificans (strain Pd 1222) protein is Large ribosomal subunit protein bL27.